A 500-amino-acid chain; its full sequence is Lysine--tRNA ligase (500 aa).

The Mg(2+) site is built by Glu-410 and Glu-417.

It belongs to the class-II aminoacyl-tRNA synthetase family. In terms of assembly, homodimer. Requires Mg(2+) as cofactor.

The protein resides in the cytoplasm. The enzyme catalyses tRNA(Lys) + L-lysine + ATP = L-lysyl-tRNA(Lys) + AMP + diphosphate. In Shewanella baltica (strain OS155 / ATCC BAA-1091), this protein is Lysine--tRNA ligase.